The sequence spans 456 residues: Two pore potassium channel c (456 aa).

A compositionally biased stretch (low complexity) spans 1–19; sequence MDTEPLLSPLSPSPHLLHP. Residues 1 to 112 form a disordered region; sequence MDTEPLLSPL…PPSLFDFIGG (112 aa). Over 1–152 the chain is Cytoplasmic; the sequence is MDTEPLLSPL…RNPPPPPRRP (152 aa). The span at 52 to 67 shows a compositional bias: pro residues; sequence HPPPPPPPPPPPPPPP. Residues 153–173 traverse the membrane as a helical segment; that stretch reads AIVLHAFLFLLAYLAMGVTFY. The segment at residues 192-211 is an intramembrane region (pore-forming); that stretch reads DALYFCIVTLCTIGYGDITP. Residues 223-243 traverse the membrane as a helical segment; it reads FVLIGFGFVDILLSGMVSYVL. Over 244–279 the chain is Cytoplasmic; that stretch reads DLQEHLLITALKNPRSVRKHRHNYIFDLKKGRMRVR. A helical transmembrane segment spans residues 280–300; the sequence is MKVALALTVVAICVGVGAAVL. An intramembrane region (pore-forming) is located at residues 310-329; that stretch reads DAVYLAVMSVTTVGYGDHAF. The helical transmembrane segment at 336-356 threads the bilayer; the sequence is LFASAWLLVSTLAVARAFLYL. Residues 357 to 456 lie on the Cytoplasmic side of the membrane; the sequence is AEMRIDKRHR…LNEKKKGKKS (100 aa). EF-hand domains follow at residues 373–408 and 412–447; these read LSRD…EMGK and KDIM…VTDL. Ca(2+) contacts are provided by Asp-386, Asp-388, Asn-390, Tyr-392, Glu-397, Asp-425, Lys-431, and Asp-436.

The protein belongs to the two pore domain potassium channel (TC 1.A.1.7) family. Homodimer.

Its subcellular location is the membrane. Inward-rectifying potassium channel. This is Two pore potassium channel c (TPKC) from Oryza sativa subsp. japonica (Rice).